The chain runs to 82 residues: Small ribosomal subunit protein uS17 (82 aa).

The protein belongs to the universal ribosomal protein uS17 family. In terms of assembly, part of the 30S ribosomal subunit.

Its function is as follows. One of the primary rRNA binding proteins, it binds specifically to the 5'-end of 16S ribosomal RNA. The polypeptide is Small ribosomal subunit protein uS17 (Phenylobacterium zucineum (strain HLK1)).